We begin with the raw amino-acid sequence, 180 residues long: Protein SPMIP9 (180 aa).

In terms of assembly, microtubule inner protein component of sperm flagellar doublet microtubules. As to expression, testis-specific. Detected in the germ cell lineage at all stages.

It localises to the nucleus. The protein resides in the cytoplasm. It is found in the cytoskeleton. The protein localises to the flagellum axoneme. Microtubule inner protein (MIP) part of the dynein-decorated doublet microtubules (DMTs) in flagella axoneme. This chain is Protein SPMIP9, found in Homo sapiens (Human).